The sequence spans 395 residues: Chalcone synthase 7 (395 aa).

Residue C169 is part of the active site.

The protein belongs to the thiolase-like superfamily. Chalcone/stilbene synthases family.

The enzyme catalyses (E)-4-coumaroyl-CoA + 3 malonyl-CoA + 3 H(+) = 2',4,4',6'-tetrahydroxychalcone + 3 CO2 + 4 CoA. The protein operates within secondary metabolite biosynthesis; flavonoid biosynthesis. Functionally, the primary product of this enzyme is 4,2',4',6'-tetrahydroxychalcone (also termed naringenin-chalcone or chalcone) which can under specific conditions spontaneously isomerize into naringenin. In Picea mariana (Black spruce), this protein is Chalcone synthase 7 (CSF7).